Here is a 428-residue protein sequence, read N- to C-terminus: MDSLLARVKRAADADALNPAQEGVTGGPDAAGLPDVSTSSPGGGGAGDKLKEKMDEYKDKLINEIENLPIWAIVLIIAGSLLFLVCCVYCVCRRSCRKRKKKEGKKGLKGAVDLKSVQLLGNSYKEKVQPDLDELPVNMEDNEDAESTKSEVKLGKLQFSLDYDFQKGELSVNVIQAADLPGMDMSGTSDPYVKVYLLPDKKKKYETKVHRKTLNPVFNESFTFKVPYAEVGSKILTFAVYDFDRFSKHDQIGQVQVPLNSIDLGRVVEDWKDLQSPDTESEKENKLGDICFSLRYVPTAGKLTVVILEAKNLKKMDVGGLSDPYVKIALLQGTKRLKKKKTTIKKNTLNPYFNESFGFEVPFEQIQKVTLIITVVDYDRIGTSEPIGRCVLGCNSSGTELRHWSDMLANPRRPIAQWHTLQEVPEKN.

The Vesicular segment spans residues 1–67 (MDSLLARVKR…KDKLINEIEN (67 aa)). The tract at residues 16-50 (ALNPAQEGVTGGPDAAGLPDVSTSSPGGGGAGDKL) is disordered. Residues 68 to 92 (LPIWAIVLIIAGSLLFLVCCVYCVC) form a helical membrane-spanning segment. The Cytoplasmic segment spans residues 93-428 (RRSCRKRKKK…HTLQEVPEKN (336 aa)). S123 carries the post-translational modification Phosphoserine; by PRKC2. Positions 147-395 (STKSEVKLGK…PIGRCVLGCN (249 aa)) are phospholipid binding. C2 domains follow at residues 153–272 (KLGK…EDWK) and 286–419 (KLGD…AQWH). Ca(2+) contacts are provided by D184, D190, D242, F243, D244, S247, K248, D250, D317, D323, D377, and D379.

Belongs to the synaptotagmin family. As to quaternary structure, binds SNAP25. Isoform 3 binds SNAP25 with higher affinity. Ca(2+) is required as a cofactor.

It localises to the cytoplasmic vesicle. The protein localises to the secretory vesicle. The protein resides in the synaptic vesicle membrane. It is found in the synapse. Acts as inhibitor of neurotransmitter release. Overexpression leads to a decrease in the amplitude of the excitatory postsynaptic potential in dissected cholinergic and glutaminergic neurons while depletion with antisense oligonucleotides leads to an increase. Overexpression of isoform 1 blocks the reversal of synaptic depression by serotonin in sensory neurons. This Aplysia californica (California sea hare) protein is Synaptotagmin-1 (SYT1).